Consider the following 721-residue polypeptide: Polyribonucleotide nucleotidyltransferase (721 aa).

Mg(2+)-binding residues include D495 and D501. The KH domain maps to P562–I621. The S1 motif domain occupies G631 to R699. Residues S702–N721 form a disordered region. The span at E711–N721 shows a compositional bias: pro residues.

The protein belongs to the polyribonucleotide nucleotidyltransferase family. Mg(2+) is required as a cofactor.

The protein localises to the cytoplasm. It catalyses the reaction RNA(n+1) + phosphate = RNA(n) + a ribonucleoside 5'-diphosphate. Functionally, involved in mRNA degradation. Catalyzes the phosphorolysis of single-stranded polyribonucleotides processively in the 3'- to 5'-direction. This chain is Polyribonucleotide nucleotidyltransferase, found in Prochlorococcus marinus (strain MIT 9312).